Here is a 152-residue protein sequence, read N- to C-terminus: UPF0225 protein Ent638_2310 (152 aa).

It belongs to the UPF0225 family.

This is UPF0225 protein Ent638_2310 from Enterobacter sp. (strain 638).